The primary structure comprises 2116 residues: Myosin-2 heavy chain (2116 aa).

The Myosin N-terminal SH3-like domain occupies 30 to 82 (SDKRYIWYNPDPKERDSYECGEIVSETSDSFTFKTVDGQDRQVKKDDANQRNP). The region spanning 86–759 (DGVEDMSELS…QLARIEEARE (674 aa)) is the Myosin motor domain. An N6,N6-dimethyllysine modification is found at Lys130. Residue 179-186 (GESGAGKT) coordinates ATP. Actin-binding regions lie at residues 638 to 660 (LASL…IPNN) and 738 to 752 (RFGI…GQLA). Residues 762–791 (ISEIIKAIQAATRGWIARKVYKQAREHTVA) enclose the IQ domain. Residues 817 to 2116 (ARPLLKRRNF…MADFFGGFKA (1300 aa)) adopt a coiled-coil conformation. 6 disordered regions span residues 1295–1314 (VNEQ…KRKV), 1363–1399 (DKSV…SKKK), 1415–1444 (TAKK…DAKN), 1711–1731 (VRDQ…SKRR), 1771–1791 (LEDE…LESE), and 1805–1844 (NRSR…AAKL). 3 stretches are compositionally biased toward basic and acidic residues: residues 1375–1399 (KNEE…SKKK), 1415–1443 (TAKK…DDAK), and 1722–1731 (RSELEDSKRR). A compositionally biased stretch (basic and acidic residues) spans 1805–1832 (NRSRAEKDRKKYEKDLKDTKYKLNDEAA). Phosphothreonine; by MHCK occurs at positions 1823, 1833, and 2029.

Belongs to the TRAFAC class myosin-kinesin ATPase superfamily. Myosin family. In terms of assembly, myosin-2 heavy chain is two-headed. It self-assembles into filaments. Hexamer of 2 heavy chain subunits (MHC), 2 alkali light chain subunits (MLC) and 2 regulatory light chain subunits (MLC-2). Associates with elmoA. Post-translationally, phosphorylation inhibits thick filament formation and reduces the actin-activated ATPase activity.

It localises to the cytoplasm. It is found in the cell cortex. Its function is as follows. Myosin is a protein that binds to actin and has ATPase activity that is activated by actin. The protein is Myosin-2 heavy chain (mhcA) of Dictyostelium discoideum (Social amoeba).